A 95-amino-acid chain; its full sequence is MASSIVSSMFLFLLLLLVFPHIDNVLGARMELRELGEINYADPLGFTRPIVPIHVPGFPPRRPTIPQLPPYRPRRCPFCYPPPPPKAFPKNSPSH.

Positions 1–27 (MASSIVSSMFLFLLLLLVFPHIDNVLG) are cleaved as a signal peptide.

As to expression, expressed in leaves, flowers and stems, but not in roots.

The protein localises to the secreted. Its subcellular location is the cell wall. Maybe involved in defense responses to X.campestris, but probably not a X.campestris pv. campestris race 750 (e.g. Xcc750) resistance gene; according to genetic data, linked to a locus influencing resistance to Xcc750. The protein is Protein ECS1 of Arabidopsis thaliana (Mouse-ear cress).